We begin with the raw amino-acid sequence, 573 residues long: Probable zinc metallopeptidase EGY3, chloroplastic (573 aa).

A chloroplast-targeting transit peptide spans 1 to 50; sequence MASLFVSTPSSSLTLKSCHSLHLRRFDRAEFSNFGKASVNQTTRSRHSLR. The segment at 38 to 105 is disordered; the sequence is SVNQTTRSRH…EKKSKQQEMD (68 aa). Basic and acidic residues-rich tracts occupy residues 52-62 and 96-105; these read SAEDDRVREPV and EKKSKQQEMD. A coiled-coil region spans residues 122–185; that stretch reads EAAIKLEKTR…KALDLNKLKS (64 aa). The next 7 membrane-spanning stretches (helical) occupy residues 274–294, 305–325, 376–396, 414–434, 441–461, 493–513, and 536–556; these read VSAI…SGFF, IANV…SEIA, ASAY…DGSF, PLLS…GNVL, VGVP…VTSL, LLLG…GLFA, and FAWG…NSGG.

This sequence belongs to the peptidase M50B family.

Its subcellular location is the plastid. The protein resides in the chloroplast membrane. Its function is as follows. Probable membrane-associated metalloprotease that may be involved in chloroplast development. The sequence is that of Probable zinc metallopeptidase EGY3, chloroplastic (EGY3) from Arabidopsis thaliana (Mouse-ear cress).